Here is a 1347-residue protein sequence, read N- to C-terminus: Serine-aspartate repeat-containing protein D (1347 aa).

The signal sequence occupies residues 1-35 (MLNRENKTAITRKGMVSNRLNKFSIRKYTVGTASI). The YSIRK-G/S signaling motif motif lies at 23–34 (FSIRKYTVGTAS). Residues 36-568 (LVGTTLIFGL…NNQSGGAGQE (533 aa)) form a ligand binding A region region. The interval 55 to 185 (STNKELNEAT…NKKVDAKTES (131 aa)) is disordered. Polar residues-rich tracts occupy residues 62-71 (EATTSASDNQ) and 94-109 (EMVS…NGNK). A compositionally biased stretch (basic and acidic residues) spans 130–145 (KSDEQASPKSTNEDLN). 2 stretches are compositionally biased toward polar residues: residues 146 to 155 (TKQTISNQEA) and 163 to 173 (NKSVVNAQPTN). The segment covering 174 to 183 (EENKKVDAKT) has biased composition (basic and acidic residues). CNA-B domains follow at residues 569–680 (VYKI…IYKP), 681–791 (KYNL…YKTP), 792–901 (KYNL…FYKP), 902–1012 (TYNL…YKTS), and 1013–1123 (KYSL…EEDT). 3 disordered regions span residues 857-883 (ETPS…TSTT), 972-992 (YTPT…GLTT), and 1078-1323 (EKPA…SNNA). 2 stretches are compositionally biased toward polar residues: residues 860 to 869 (SGYTPTQVGS) and 972 to 981 (YTPTSVTSGN). Acidic residues-rich tracts occupy residues 1091–1101 (TEDDKDADGGE) and 1118–1286 (YFEE…DSDS). The short motif at 1310–1314 (LPETG) is the LPXTG sorting signal element. Thr1313 is modified (pentaglycyl murein peptidoglycan amidated threonine). Residues 1314–1347 (GNENSGSNNATLFGGLFAALGSLLLFGRRKKQNK) constitute a propeptide, removed by sortase.

This sequence belongs to the serine-aspartate repeat-containing protein (SDr) family. As to quaternary structure, interacts with host DSG1; this interaction increases S.aureus adherence to keratinocytes.

It localises to the secreted. It is found in the cell wall. In terms of biological role, cell surface-associated calcium-binding protein which plays an important role in adhesion and pathogenesis. Mediates interactions with components of the extracellular matrix such as host DSG1 to promote bacterial adhesion to host cells. Contributes to the resistance to killing by innate immune components such as neutrophils present in blood and thus attenuates bacterial clearance. This Staphylococcus aureus (strain MW2) protein is Serine-aspartate repeat-containing protein D (sdrD).